Here is a 538-residue protein sequence, read N- to C-terminus: Putative cysteine ligase BshC (538 aa).

Positions 419-445 (IEAKRQIQAMEQLLAEKYSELASYLEE) form a coiled coil.

The protein belongs to the BshC family.

Functionally, involved in bacillithiol (BSH) biosynthesis. May catalyze the last step of the pathway, the addition of cysteine to glucosamine malate (GlcN-Mal) to generate BSH. This chain is Putative cysteine ligase BshC, found in Lysinibacillus sphaericus (strain C3-41).